Here is a 59-residue protein sequence, read N- to C-terminus: Protein translocase subunit SecE (59 aa).

The helical transmembrane segment at 39 to 59 (VMALFLGLIDALFVALLSFFF) threads the bilayer.

This sequence belongs to the SecE/SEC61-gamma family. As to quaternary structure, component of the Sec protein translocase complex. Heterotrimer consisting of SecY, SecE and SecG subunits. The heterotrimers can form oligomers, although 1 heterotrimer is thought to be able to translocate proteins. Interacts with the ribosome. Interacts with SecDF, and other proteins may be involved. Interacts with SecA.

It localises to the cell inner membrane. Essential subunit of the Sec protein translocation channel SecYEG. Clamps together the 2 halves of SecY. May contact the channel plug during translocation. The sequence is that of Protein translocase subunit SecE from Treponema pallidum (strain Nichols).